Here is a 554-residue protein sequence, read N- to C-terminus: MIETIPTKPYEGQRPGTSGLRKKVTVFEQPNYVENFVQATMDVVEPSAKGAHLVVGGDGRYFNFHAIQVIAAIAAGNGVEKIIVGTNGYLSTPAASHIIRKYKLTGGIILTASHNAGGPKNDFGIKYNLGNGGPAPESVTEKIYSITKTISEYKMVKIPPLDLTTTGVRRYGPLTVEVIDPVKDYVQLMKEIFDFDLIRSFLSKNPDFTFVFDALHGITGPYGEALFCKELGMPSSVCQNCKPLPDFGGGHPDPNLTYAKSLVARVDRDNIVMGAASDGDGDRNMIYGANAFVTPSDSVAIIAHHAELIPYFRDGGVHGFARSMPTSGAIDRVGKYKGKNVYEVPTGWKFFCNLFDAKRLSICGEESFGTGSDHIREKDGVWGILCWLNILAGLNAQNPKIKTLIDVKKDFYNIYGRTFYSRYDYEELENEAAGKVMDRMRAIADDKSKVGEAVLPGFVVSEAGDFEYHDPIDGSESKHQGLYIKFENGSRIVTRLSGTGSSGATLRLYMEKHESDSSKFDLDAQVALKPVVHAALEILALEELTGRKEPTVIT.

An alpha-D-glucose 1,6-bisphosphate-binding site is contributed by R21. Position 111 is a phosphothreonine (T111). S113 is an alpha-D-glucose 1,6-bisphosphate binding site. Catalysis depends on S113, which acts as the Phosphoserine intermediate. Positions 113, 278, 280, and 282 each coordinate Mg(2+). At S113 the chain carries Phosphoserine. D282, R283, T346, E365, S367, and K378 together coordinate alpha-D-glucose 1,6-bisphosphate.

This sequence belongs to the phosphohexose mutase family. As to quaternary structure, monomer. Mg(2+) is required as a cofactor.

It is found in the cytoplasm. It localises to the nucleus. It catalyses the reaction alpha-D-glucose 1-phosphate = alpha-D-glucose 6-phosphate. The catalysed reaction is O-phospho-L-seryl-[protein] + alpha-D-glucose 1-phosphate = alpha-D-glucose 1,6-bisphosphate + L-seryl-[protein]. It carries out the reaction alpha-D-glucose 1,6-bisphosphate + L-seryl-[protein] = O-phospho-L-seryl-[protein] + alpha-D-glucose 6-phosphate. Catalyzes the reversible isomerization of alpha-D-glucose 1-phosphate to alpha-D-glucose 6-phosphate. The mechanism proceeds via the intermediate compound alpha-D-glucose 1,6-bisphosphate. Key enzyme in hexose metabolism. The reverse reaction is an essential step for biosynthesis because glucose 1-phosphate is the starting point for the synthesis of UDP-glucose, which acts as a precursor for the synthesis of oligosaccharides and trehalose. The protein is Phosphoglucomutase of Schizosaccharomyces pombe (strain 972 / ATCC 24843) (Fission yeast).